A 473-amino-acid polypeptide reads, in one-letter code: Glutamate--tRNA ligase 2 (473 aa).

The 'HIGH' region signature appears at proline 11 to glycine 21. Positions lysine 113–serine 133 are enriched in basic and acidic residues. Residues lysine 113–proline 136 are disordered. The 'KMSKS' region motif lies at lysine 240 to arginine 244. Position 243 (lysine 243) interacts with ATP.

Belongs to the class-I aminoacyl-tRNA synthetase family. Glutamate--tRNA ligase type 1 subfamily. In terms of assembly, monomer.

The protein resides in the cytoplasm. The enzyme catalyses tRNA(Glu) + L-glutamate + ATP = L-glutamyl-tRNA(Glu) + AMP + diphosphate. Catalyzes the attachment of glutamate to tRNA(Glu) in a two-step reaction: glutamate is first activated by ATP to form Glu-AMP and then transferred to the acceptor end of tRNA(Glu). The polypeptide is Glutamate--tRNA ligase 2 (Brucella abortus (strain S19)).